The sequence spans 235 residues: Phosphoribosylaminoimidazole-succinocarboxamide synthase (235 aa).

This sequence belongs to the SAICAR synthetase family.

The enzyme catalyses 5-amino-1-(5-phospho-D-ribosyl)imidazole-4-carboxylate + L-aspartate + ATP = (2S)-2-[5-amino-1-(5-phospho-beta-D-ribosyl)imidazole-4-carboxamido]succinate + ADP + phosphate + 2 H(+). Its pathway is purine metabolism; IMP biosynthesis via de novo pathway; 5-amino-1-(5-phospho-D-ribosyl)imidazole-4-carboxamide from 5-amino-1-(5-phospho-D-ribosyl)imidazole-4-carboxylate: step 1/2. This is Phosphoribosylaminoimidazole-succinocarboxamide synthase from Clostridium perfringens (strain 13 / Type A).